The following is a 626-amino-acid chain: Trehalase (626 aa).

Transmembrane regions (helical) follow at residues 20-40 (KLFL…FIYL) and 45-65 (SLFF…MLDS). Residues Arg224, Asp232, Asn268, Arg277, Gln279, Arg344, and Glu346 each coordinate alpha,alpha-trehalose. Residues Asp380 and Glu580 each act as proton donor/acceptor in the active site. Residues Glu580 and Glu595 each contribute to the alpha,alpha-trehalose site.

Belongs to the glycosyl hydrolase 37 family. As to quaternary structure, forms homodimers. In terms of tissue distribution, highly expressed in flowers. Expressed at low levels in leaves and stems. Expressed in guard cells.

The protein resides in the cell membrane. It localises to the cytoplasm. It is found in the nucleus. The enzyme catalyses alpha,alpha-trehalose + H2O = alpha-D-glucose + beta-D-glucose. Its function is as follows. Involved in the regulation of trehalose content by hydrolyzing trehalose to glucose. May play a role in the regulation of abscisic acid-induced stomatal closure in response to drought stress. This is Trehalase (TRE1) from Arabidopsis thaliana (Mouse-ear cress).